The following is a 156-amino-acid chain: Ribosomal RNA large subunit methyltransferase H (156 aa).

S-adenosyl-L-methionine is bound by residues leucine 73, glycine 104, and 123 to 128; that span reads LSPLTL.

It belongs to the RNA methyltransferase RlmH family. Homodimer.

The protein resides in the cytoplasm. The enzyme catalyses pseudouridine(1915) in 23S rRNA + S-adenosyl-L-methionine = N(3)-methylpseudouridine(1915) in 23S rRNA + S-adenosyl-L-homocysteine + H(+). Specifically methylates the pseudouridine at position 1915 (m3Psi1915) in 23S rRNA. The chain is Ribosomal RNA large subunit methyltransferase H from Aliivibrio fischeri (strain MJ11) (Vibrio fischeri).